We begin with the raw amino-acid sequence, 197 residues long: Large ribosomal subunit protein bL25 (197 aa).

Belongs to the bacterial ribosomal protein bL25 family. CTC subfamily. Part of the 50S ribosomal subunit; part of the 5S rRNA/L5/L18/L25 subcomplex. Contacts the 5S rRNA. Binds to the 5S rRNA independently of L5 and L18.

Its function is as follows. This is one of the proteins that binds to the 5S RNA in the ribosome where it forms part of the central protuberance. The sequence is that of Large ribosomal subunit protein bL25 from Citrifermentans bemidjiense (strain ATCC BAA-1014 / DSM 16622 / JCM 12645 / Bem) (Geobacter bemidjiensis).